A 208-amino-acid chain; its full sequence is Ribosomal RNA large subunit methyltransferase E (208 aa).

S-adenosyl-L-methionine is bound by residues Gly-63, Trp-65, Asp-83, Asp-99, and Asp-124. The Proton acceptor role is filled by Lys-164.

Belongs to the class I-like SAM-binding methyltransferase superfamily. RNA methyltransferase RlmE family.

Its subcellular location is the cytoplasm. It carries out the reaction uridine(2552) in 23S rRNA + S-adenosyl-L-methionine = 2'-O-methyluridine(2552) in 23S rRNA + S-adenosyl-L-homocysteine + H(+). Specifically methylates the uridine in position 2552 of 23S rRNA at the 2'-O position of the ribose in the fully assembled 50S ribosomal subunit. This Blochmanniella pennsylvanica (strain BPEN) protein is Ribosomal RNA large subunit methyltransferase E.